The sequence spans 152 residues: Transcriptional repressor NrdR (152 aa).

A zinc finger spans residues 3–34; sequence CPSCQHNGTRVLDSRPVDDGKSIRRRRECESC. An ATP-cone domain is found at 49–139; the sequence is LIVVKKEGVR…VYRQFKDINV (91 aa).

It belongs to the NrdR family. It depends on Zn(2+) as a cofactor.

Its function is as follows. Negatively regulates transcription of bacterial ribonucleotide reductase nrd genes and operons by binding to NrdR-boxes. The polypeptide is Transcriptional repressor NrdR (Bacillus subtilis (strain 168)).